Reading from the N-terminus, the 493-residue chain is Glutamate--tRNA ligase (493 aa).

Positions 10–20 (PSPTGDPHVGT) match the 'HIGH' region motif. Positions 107, 109, 134, and 136 each coordinate Zn(2+). A 'KMSKS' region motif is present at residues 251–255 (KLSKR). Residue K254 coordinates ATP.

The protein belongs to the class-I aminoacyl-tRNA synthetase family. Glutamate--tRNA ligase type 1 subfamily. As to quaternary structure, monomer. Requires Zn(2+) as cofactor.

It is found in the cytoplasm. It catalyses the reaction tRNA(Glu) + L-glutamate + ATP = L-glutamyl-tRNA(Glu) + AMP + diphosphate. Catalyzes the attachment of glutamate to tRNA(Glu) in a two-step reaction: glutamate is first activated by ATP to form Glu-AMP and then transferred to the acceptor end of tRNA(Glu). The protein is Glutamate--tRNA ligase of Ectopseudomonas mendocina (strain ymp) (Pseudomonas mendocina).